A 172-amino-acid polypeptide reads, in one-letter code: 18.6 kDa class III heat shock protein (172 aa).

Residues 29-54 (RRSAGDHAHHAAHGHGQHRISGIGGG) are disordered. The 125-residue stretch at 48-172 (ISGIGGGAPV…KTKSVQVTIA (125 aa)) folds into the sHSP domain.

Belongs to the small heat shock protein (HSP20) family. May form oligomeric structures.

The protein localises to the cytoplasm. In Oryza sativa subsp. japonica (Rice), this protein is 18.6 kDa class III heat shock protein (HSP18.6).